Here is a 767-residue protein sequence, read N- to C-terminus: Bifunctional lysine-specific demethylase and histidyl-hydroxylase NO66 (767 aa).

Positions 21 to 324 (TVSQKQQREK…GRQEAHRQNS (304 aa)) are disordered. Ser44 is subject to Phosphoserine. Positions 46 to 71 (SDDDDEDDGEGEDDNDSNSDEDESGS) are enriched in acidic residues. Low complexity predominate over residues 72 to 81 (ESDATSADDS). Over residues 82–98 (FSSDDNDDDDSGDEDGS) the composition is skewed to acidic residues. 2 stretches are compositionally biased toward polar residues: residues 127 to 137 (YTINSENSSVE) and 177 to 199 (ESAT…TSKP). Ser214 carries the phosphoserine modification. The segment covering 262 to 279 (PSSSGASCPLPSKTSKQV) has biased composition (polar residues). Over residues 315 to 324 (GRQEAHRQNS) the composition is skewed to basic and acidic residues. Positions 420–565 (CSIRILNPST…NLLEKLMPMV (146 aa)) constitute a JmjC domain. His466, Asp468, and His531 together coordinate Fe cation.

Belongs to the ROX family. NO66 subfamily. The cofactor is Fe(2+).

The protein localises to the nucleus. It carries out the reaction N(6),N(6)-dimethyl-L-lysyl(36)-[histone H3] + 2 2-oxoglutarate + 2 O2 = L-lysyl(36)-[histone H3] + 2 formaldehyde + 2 succinate + 2 CO2. Oxygenase that can act as both a histone lysine demethylase and a ribosomal histidine hydroxylase. Specifically demethylates 'Lys-4' (H3K4me) and 'Lys-36' (H3K36me) of histone H3, thereby playing a central role in histone code. The protein is Bifunctional lysine-specific demethylase and histidyl-hydroxylase NO66 of Drosophila willistoni (Fruit fly).